Consider the following 506-residue polypeptide: Probable Xaa-Pro aminopeptidase PAAG_05466 (506 aa).

Residues Asp285, Asp296, Glu433, and Glu471 each coordinate Mn(2+).

It belongs to the peptidase M24B family. Requires Mn(2+) as cofactor.

The catalysed reaction is Release of any N-terminal amino acid, including proline, that is linked to proline, even from a dipeptide or tripeptide.. Its function is as follows. Catalyzes the removal of a penultimate prolyl residue from the N-termini of peptides. The sequence is that of Probable Xaa-Pro aminopeptidase PAAG_05466 from Paracoccidioides lutzii (strain ATCC MYA-826 / Pb01) (Paracoccidioides brasiliensis).